Reading from the N-terminus, the 492-residue chain is UPF0652 protein C22H10.08 (492 aa).

Belongs to the UPF0652 family.

The protein localises to the cytoplasm. The protein resides in the nucleus. The protein is UPF0652 protein C22H10.08 of Schizosaccharomyces pombe (strain 972 / ATCC 24843) (Fission yeast).